The sequence spans 185 residues: MKDPILKEAELRMKKSVEAIDEELKKLRTGRPSPALLEEIKIDYYGVPTPINQVATINVTEERSLIIKPWEKNLLSAIEKAIQASDLGLNPTNDGNVVRLVFPSPTTEQRQKWVKKTKEIVEHGKIAVRNIRRDVIKELKEMTKNGEISEDDEKRLEKEVQNLTDKYIEELDKLFERKEKEIMEF.

It belongs to the RRF family.

It is found in the cytoplasm. Functionally, responsible for the release of ribosomes from messenger RNA at the termination of protein biosynthesis. May increase the efficiency of translation by recycling ribosomes from one round of translation to another. In Thermosipho africanus (strain TCF52B), this protein is Ribosome-recycling factor.